Consider the following 348-residue polypeptide: Anthranilate phosphoribosyltransferase (348 aa).

5-phospho-alpha-D-ribose 1-diphosphate is bound by residues G89, 92–93 (GD), T97, 99–102 (NIST), 117–125 (KHGNRSVSS), and S129. G89 is an anthranilate binding site. S101 is a Mg(2+) binding site. Residue N120 participates in anthranilate binding. An anthranilate-binding site is contributed by R175. Positions 233 and 234 each coordinate Mg(2+).

It belongs to the anthranilate phosphoribosyltransferase family. Homodimer. Mg(2+) serves as cofactor.

The enzyme catalyses N-(5-phospho-beta-D-ribosyl)anthranilate + diphosphate = 5-phospho-alpha-D-ribose 1-diphosphate + anthranilate. It functions in the pathway amino-acid biosynthesis; L-tryptophan biosynthesis; L-tryptophan from chorismate: step 2/5. Functionally, catalyzes the transfer of the phosphoribosyl group of 5-phosphorylribose-1-pyrophosphate (PRPP) to anthranilate to yield N-(5'-phosphoribosyl)-anthranilate (PRA). This Shewanella putrefaciens (strain CN-32 / ATCC BAA-453) protein is Anthranilate phosphoribosyltransferase.